The primary structure comprises 514 residues: Membrane-bound lytic murein transglycosylase F (514 aa).

The first 30 residues, 1–30 (MKKLKINYLFIGILTLLLAAALWPSIPWFG), serve as a signal peptide directing secretion. The interval 31 to 269 (KTENHIAAIQ…RIEEKYLGHG (239 aa)) is non-LT domain. The tract at residues 270–514 (DDFDYVDTRS…LFTPQKKEEK (245 aa)) is LT domain. E314 is a catalytic residue.

This sequence in the N-terminal section; belongs to the bacterial solute-binding protein 3 family. It in the C-terminal section; belongs to the transglycosylase Slt family.

Its subcellular location is the cell outer membrane. The catalysed reaction is Exolytic cleavage of the (1-&gt;4)-beta-glycosidic linkage between N-acetylmuramic acid (MurNAc) and N-acetylglucosamine (GlcNAc) residues in peptidoglycan, from either the reducing or the non-reducing ends of the peptidoglycan chains, with concomitant formation of a 1,6-anhydrobond in the MurNAc residue.. Its function is as follows. Murein-degrading enzyme that degrades murein glycan strands and insoluble, high-molecular weight murein sacculi, with the concomitant formation of a 1,6-anhydromuramoyl product. Lytic transglycosylases (LTs) play an integral role in the metabolism of the peptidoglycan (PG) sacculus. Their lytic action creates space within the PG sacculus to allow for its expansion as well as for the insertion of various structures such as secretion systems and flagella. The polypeptide is Membrane-bound lytic murein transglycosylase F (Salmonella paratyphi B (strain ATCC BAA-1250 / SPB7)).